Consider the following 989-residue polypeptide: DEAD-box ATP-dependent RNA helicase 45 (989 aa).

Basic and acidic residues-rich tracts occupy residues Met1 to Asp39 and Arg64 to Lys101. Disordered regions lie at residues Met1–Glu248 and Gln305–Glu330. Residues Leu88–Gln182 are a coiled coil. Ser119 is subject to Phosphoserine. Basic and acidic residues predominate over residues Ser134–Glu179. Ser200 carries the post-translational modification Phosphoserine. Residues Glu203–Gly222 show a composition bias toward basic and acidic residues. Polar residues predominate over residues Glu230–Glu239. Positions Asp321–Glu330 are enriched in acidic residues. The Q motif motif lies at Gln396–Ala424. Positions Leu427–Ile605 constitute a Helicase ATP-binding domain. Position 440–447 (Ala440–Thr447) interacts with ATP. Residues Asp553–Asp556 carry the DEAD box motif. In terms of domain architecture, Helicase C-terminal spans Gln590–Ala748.

This sequence belongs to the DEAD box helicase family. DDX46/PRP5 subfamily.

The enzyme catalyses ATP + H2O = ADP + phosphate + H(+). In Arabidopsis thaliana (Mouse-ear cress), this protein is DEAD-box ATP-dependent RNA helicase 45 (RH45).